A 588-amino-acid chain; its full sequence is Aspartate--tRNA ligase (588 aa).

E177 contacts L-aspartate. The tract at residues 201-204 (QLFK) is aspartate. Residue R223 coordinates L-aspartate. ATP is bound by residues 223–225 (RDE) and Q232. H451 contributes to the L-aspartate binding site. Position 485 (E485) interacts with ATP. Residue R492 coordinates L-aspartate. 537–540 (GLDR) lines the ATP pocket.

This sequence belongs to the class-II aminoacyl-tRNA synthetase family. Type 1 subfamily. In terms of assembly, homodimer.

Its subcellular location is the cytoplasm. It carries out the reaction tRNA(Asp) + L-aspartate + ATP = L-aspartyl-tRNA(Asp) + AMP + diphosphate. In terms of biological role, catalyzes the attachment of L-aspartate to tRNA(Asp) in a two-step reaction: L-aspartate is first activated by ATP to form Asp-AMP and then transferred to the acceptor end of tRNA(Asp). The protein is Aspartate--tRNA ligase of Staphylococcus epidermidis (strain ATCC 35984 / DSM 28319 / BCRC 17069 / CCUG 31568 / BM 3577 / RP62A).